Reading from the N-terminus, the 237-residue chain is Probable septum site-determining protein MinC (237 aa).

Belongs to the MinC family. In terms of assembly, interacts with MinD and FtsZ.

Functionally, cell division inhibitor that blocks the formation of polar Z ring septums. Rapidly oscillates between the poles of the cell to destabilize FtsZ filaments that have formed before they mature into polar Z rings. Prevents FtsZ polymerization. This is Probable septum site-determining protein MinC from Neisseria gonorrhoeae.